Reading from the N-terminus, the 529-residue chain is Bifunctional purine biosynthesis protein PurH (529 aa).

In terms of domain architecture, MGS-like spans 1–148 (MQQRRPVRRA…KNHKDVAIVV (148 aa)). Position 287 is an N6-acetyllysine (Lys287).

Belongs to the PurH family.

The enzyme catalyses (6R)-10-formyltetrahydrofolate + 5-amino-1-(5-phospho-beta-D-ribosyl)imidazole-4-carboxamide = 5-formamido-1-(5-phospho-D-ribosyl)imidazole-4-carboxamide + (6S)-5,6,7,8-tetrahydrofolate. The catalysed reaction is IMP + H2O = 5-formamido-1-(5-phospho-D-ribosyl)imidazole-4-carboxamide. It functions in the pathway purine metabolism; IMP biosynthesis via de novo pathway; 5-formamido-1-(5-phospho-D-ribosyl)imidazole-4-carboxamide from 5-amino-1-(5-phospho-D-ribosyl)imidazole-4-carboxamide (10-formyl THF route): step 1/1. The protein operates within purine metabolism; IMP biosynthesis via de novo pathway; IMP from 5-formamido-1-(5-phospho-D-ribosyl)imidazole-4-carboxamide: step 1/1. This chain is Bifunctional purine biosynthesis protein PurH, found in Escherichia coli O17:K52:H18 (strain UMN026 / ExPEC).